Here is a 454-residue protein sequence, read N- to C-terminus: MLELLTEKFSHALEKLTNARKITEKNINQTLREIRLALLEADVDYQVAKDFIKRIREKVVGKEVPKNLSPAEFVIKTVYEELVDILGGEKADLKKGTVLFVGLQGTGKTTTIGKIANLLKKGGHKVAVSSTDLRRPAAMLQLQRLAERVGVPYYEFEEGLGAVEIARRAVKRAKEESVDYLLLDTAGRLHVDEELMKELQEIKEVTNPSEILYVADAMQGQTALETAKTFHERLGLTGVVITKMDGDARGGLALSVKEVLGVPIKFIGVGEKIEDIEPFYPDRIAQRILGLGDIQSLVEKAQEVITEDKAQVMATKVMTGEFDLEDLREMLRMIQQMGPLDKLLSMIPGVAPQLKHLKVDEKQFKKIEAIINSMTPEERRNPKIINMSRKKRIARGSGTTVSDVNKLLKRYEEMKKMMRKLQKAGGMPAIPKMPKMPRFPSEASSFNLFLFLST.

Residues 102–109 (GLQGTGKT), 184–188 (DTAGR), and 242–245 (TKMD) contribute to the GTP site.

It belongs to the GTP-binding SRP family. SRP54 subfamily. Part of the signal recognition particle protein translocation system, which is composed of SRP and FtsY.

Its subcellular location is the cytoplasm. The catalysed reaction is GTP + H2O = GDP + phosphate + H(+). Functionally, involved in targeting and insertion of nascent membrane proteins into the cytoplasmic membrane. Binds to the hydrophobic signal sequence of the ribosome-nascent chain (RNC) as it emerges from the ribosomes. The SRP-RNC complex is then targeted to the cytoplasmic membrane where it interacts with the SRP receptor FtsY. This is Signal recognition particle protein from Aquifex aeolicus (strain VF5).